A 175-amino-acid polypeptide reads, in one-letter code: Ribosome maturation factor RimM (175 aa).

Residues 96–175 (EEDFYWRDLI…LIQVNWEPDF (80 aa)) enclose the PRC barrel domain.

This sequence belongs to the RimM family. Binds ribosomal protein uS19.

Its subcellular location is the cytoplasm. In terms of biological role, an accessory protein needed during the final step in the assembly of 30S ribosomal subunit, possibly for assembly of the head region. Essential for efficient processing of 16S rRNA. May be needed both before and after RbfA during the maturation of 16S rRNA. It has affinity for free ribosomal 30S subunits but not for 70S ribosomes. This chain is Ribosome maturation factor RimM, found in Psychromonas ingrahamii (strain DSM 17664 / CCUG 51855 / 37).